The chain runs to 179 residues: Large ribosomal subunit protein uL5 (179 aa).

Belongs to the universal ribosomal protein uL5 family. Part of the 50S ribosomal subunit; part of the 5S rRNA/L5/L18/L25 subcomplex. Contacts the 5S rRNA and the P site tRNA. Forms a bridge to the 30S subunit in the 70S ribosome.

This is one of the proteins that bind and probably mediate the attachment of the 5S RNA into the large ribosomal subunit, where it forms part of the central protuberance. In the 70S ribosome it contacts protein S13 of the 30S subunit (bridge B1b), connecting the 2 subunits; this bridge is implicated in subunit movement. Contacts the P site tRNA; the 5S rRNA and some of its associated proteins might help stabilize positioning of ribosome-bound tRNAs. In Halothermothrix orenii (strain H 168 / OCM 544 / DSM 9562), this protein is Large ribosomal subunit protein uL5.